We begin with the raw amino-acid sequence, 589 residues long: Kelch-like protein 25 (589 aa).

The region spanning 46–114 (TDVTLWAGDR…AYSSRIVINE (69 aa)) is the BTB domain. Positions 149-250 (CLGMMVLSDA…LPSDCLKNAV (102 aa)) constitute a BACK domain. Kelch repeat units lie at residues 296–340 (TLLI…AIGC), 341–388 (KVYV…ELEN), 389–444 (CLYV…SAKL), 446–492 (LFVF…VLGS), 493–538 (QIFI…ASGN), and 539–585 (KLYV…STWK).

Component of the BCR(KLHL25) E3 ubiquitin ligase complex, at least composed of CUL3, KLHL25 and RBX1.

Its pathway is protein modification; protein ubiquitination. Substrate-specific adapter of a BCR (BTB-CUL3-RBX1) E3 ubiquitin ligase complex involved in various processes, such as translation homeostasis and lipid synthesis. The BCR(KLHL25) ubiquitin ligase complex acts by mediating ubiquitination of hypophosphorylated EIF4EBP1 (4E-BP1): ubiquitination and subsequent degradation of hypophosphorylated EIF4EBP1 (4E-BP1) probably serves as a homeostatic mechanism to maintain translation and prevent eIF4E inhibition when eIF4E levels are low. The BCR(KLHL25) complex does not target EIF4EBP1 (4E-BP1) when it is hyperphosphorylated or associated with eIF4E. The BCR(KLHL25) complex also acts as a regulator of lipid synthesis by mediating ubiquitination and degradation of ACLY, thereby inhibiting lipid synthesis. BCR(KLHL25)-mediated degradation of ACLY promotes fatty acid oxidation and is required for differentiation of inducible regulatory T (iTreg) cells. The polypeptide is Kelch-like protein 25 (Mus musculus (Mouse)).